Here is a 182-residue protein sequence, read N- to C-terminus: UPF0397 protein SAG1634 (182 aa).

5 helical membrane passes run 9–29 (VVAT…VNIP), 42–62 (AVLA…TGFI), 74–94 (SPWW…GFFA), 109–129 (LLLF…VVAP), and 148–168 (FLSS…LLLA).

Belongs to the UPF0397 family.

It localises to the cell membrane. In Streptococcus agalactiae serotype V (strain ATCC BAA-611 / 2603 V/R), this protein is UPF0397 protein SAG1634.